Consider the following 193-residue polypeptide: MEPFRIHKGTAAVLMNDNIDTDQIIPKQYLKRIERTGFGKFLFDEWRYDNERHENPNFPLNSPDRKGASILITGNNFGCGSSREHAPWALADYGFRVIIAGGFADIFYMNCMKNGMLPIVMDKEMREKLVKTDAREQIEVDLENEVITTSTHRFHFTIEKMWKEKLLNGLDEISITMQYEQEIKEYERRVAAY.

The protein belongs to the LeuD family. LeuD type 1 subfamily. Heterodimer of LeuC and LeuD.

The enzyme catalyses (2R,3S)-3-isopropylmalate = (2S)-2-isopropylmalate. Its pathway is amino-acid biosynthesis; L-leucine biosynthesis; L-leucine from 3-methyl-2-oxobutanoate: step 2/4. Functionally, catalyzes the isomerization between 2-isopropylmalate and 3-isopropylmalate, via the formation of 2-isopropylmaleate. This Bacillus cereus (strain AH820) protein is 3-isopropylmalate dehydratase small subunit.